The chain runs to 269 residues: Undecaprenyl-diphosphatase (269 aa).

The next 8 membrane-spanning stretches (helical) occupy residues 4–24 (IELWTAVLAGVVQGITEWLPI), 50–70 (LWLHAGTLLAVLLRFGVPYWL), 86–106 (LFAIVATVCTAVVGLPVYKVL), 113–133 (ATGDAVQMAIGGALIVTGLLL), 146–166 (VNVVDAVIVGLGQGFSVIPGI), 186–206 (AVWLSFYLAGPAMLGATALEL), 220–240 (WMVTAIGVSFVVSLICMEVLL), and 246–266 (LDFSKVCLLLGGIALLVPLAA).

The protein belongs to the UppP family.

The protein resides in the cell membrane. The enzyme catalyses di-trans,octa-cis-undecaprenyl diphosphate + H2O = di-trans,octa-cis-undecaprenyl phosphate + phosphate + H(+). Catalyzes the dephosphorylation of undecaprenyl diphosphate (UPP). This Methanopyrus kandleri (strain AV19 / DSM 6324 / JCM 9639 / NBRC 100938) protein is Undecaprenyl-diphosphatase.